Here is a 164-residue protein sequence, read N- to C-terminus: Glycine cleavage system H protein, mitochondrial (164 aa).

The N-terminal 34 residues, 1–34 (MALRLWASSAANALKISCSGATRAAPAYSISRYF), are a transit peptide targeting the mitochondrion. In terms of domain architecture, Lipoyl-binding spans 56–138 (VATIGITDHA…YEDGWMIKVK (83 aa)). The residue at position 97 (Lys-97) is an N6-lipoyllysine.

This sequence belongs to the GcvH family. The glycine cleavage system is composed of four proteins: P, T, L and H. (R)-lipoate serves as cofactor.

It is found in the mitochondrion. In terms of biological role, the glycine cleavage system catalyzes the degradation of glycine. The H protein shuttles the methylamine group of glycine from the P protein to the T protein. This chain is Glycine cleavage system H protein, mitochondrial (GDCSH), found in Oryza sativa subsp. indica (Rice).